The primary structure comprises 449 residues: Sensor protein QseC (449 aa).

Over 1–12 the chain is Cytoplasmic; it reads MKFTQRLSLRVR. Residues 13–33 traverse the membrane as a helical segment; sequence LTLIFLILASVTWLLSSFVAW. At 34-156 the chain is on the periplasmic side; it reads KQTTDNVDEL…QEWEYREDMA (123 aa). The chain crosses the membrane as a helical span at residues 157–177; it reads LAIVAGQLIPWLVALPVMLII. The Cytoplasmic segment spans residues 178-449; it reads MMVLLGRELA…QGGFEAKVSW (272 aa). A Histidine kinase domain is found at 243-449; it reads DAAHELRSPL…QGGFEAKVSW (207 aa). H246 bears the Phosphohistidine; by autocatalysis mark.

The protein resides in the cell inner membrane. The catalysed reaction is ATP + protein L-histidine = ADP + protein N-phospho-L-histidine.. Its function is as follows. Member of a two-component regulatory system QseB/QseC. Activates the flagella regulon by activating transcription of FlhDC. May activate QseB by phosphorylation. This chain is Sensor protein QseC (qseC), found in Escherichia coli O157:H7.